An 856-amino-acid chain; its full sequence is Translation initiation factor IF-2 (856 aa).

The region spanning 356–526 (PRAPVVTVMG…LLIADLLELK (171 aa)) is the tr-type G domain. A G1 region spans residues 365 to 372 (GHVDHGKT). 365 to 372 (GHVDHGKT) is a GTP binding site. The interval 390 to 394 (GITQH) is G2. The G3 stretch occupies residues 412–415 (DTPG). GTP contacts are provided by residues 412–416 (DTPGH) and 466–469 (NKID). A G4 region spans residues 466–469 (NKID). Positions 502 to 504 (SAK) are G5.

Belongs to the TRAFAC class translation factor GTPase superfamily. Classic translation factor GTPase family. IF-2 subfamily.

The protein resides in the cytoplasm. Its function is as follows. One of the essential components for the initiation of protein synthesis. Protects formylmethionyl-tRNA from spontaneous hydrolysis and promotes its binding to the 30S ribosomal subunits. Also involved in the hydrolysis of GTP during the formation of the 70S ribosomal complex. In Ehrlichia ruminantium (strain Gardel), this protein is Translation initiation factor IF-2.